Here is a 374-residue protein sequence, read N- to C-terminus: uncharacterized protein (374 aa).

This sequence belongs to the mimivirus L41 family.

This is an uncharacterized protein from Acanthamoeba polyphaga (Amoeba).